The chain runs to 160 residues: Cytochrome b6-f complex subunit 4 (160 aa).

3 helical membrane passes run 36–56, 95–115, and 131–151; these read LLYI…GLSV, LLGV…PFIE, and TVFL…ALPI.

The protein belongs to the cytochrome b family. PetD subfamily. As to quaternary structure, the 4 large subunits of the cytochrome b6-f complex are cytochrome b6, subunit IV (17 kDa polypeptide, petD), cytochrome f and the Rieske protein, while the 4 small subunits are petG, petL, petM and petN. The complex functions as a dimer.

Its subcellular location is the plastid. The protein resides in the chloroplast thylakoid membrane. In terms of biological role, component of the cytochrome b6-f complex, which mediates electron transfer between photosystem II (PSII) and photosystem I (PSI), cyclic electron flow around PSI, and state transitions. The chain is Cytochrome b6-f complex subunit 4 from Chlorella vulgaris (Green alga).